The following is a 200-amino-acid chain: NADH-quinone oxidoreductase subunit C (200 aa).

This sequence belongs to the complex I 30 kDa subunit family. As to quaternary structure, NDH-1 is composed of 14 different subunits. Subunits NuoB, C, D, E, F, and G constitute the peripheral sector of the complex.

The protein resides in the cell inner membrane. The enzyme catalyses a quinone + NADH + 5 H(+)(in) = a quinol + NAD(+) + 4 H(+)(out). Its function is as follows. NDH-1 shuttles electrons from NADH, via FMN and iron-sulfur (Fe-S) centers, to quinones in the respiratory chain. The immediate electron acceptor for the enzyme in this species is believed to be ubiquinone. Couples the redox reaction to proton translocation (for every two electrons transferred, four hydrogen ions are translocated across the cytoplasmic membrane), and thus conserves the redox energy in a proton gradient. In Rhizobium etli (strain ATCC 51251 / DSM 11541 / JCM 21823 / NBRC 15573 / CFN 42), this protein is NADH-quinone oxidoreductase subunit C.